A 658-amino-acid polypeptide reads, in one-letter code: Threonine--tRNA ligase (658 aa).

Residues 1–64 form the TGS domain; that stretch reads MSCSISLSFP…GQSGQVEIIT (64 aa). Positions 246–549 are catalytic; it reads DHRRLGREMD…LIENFAGHMP (304 aa). Residues Cys-343, His-394, and His-526 each coordinate Zn(2+).

Belongs to the class-II aminoacyl-tRNA synthetase family. As to quaternary structure, homodimer. The cofactor is Zn(2+).

It localises to the cytoplasm. It carries out the reaction tRNA(Thr) + L-threonine + ATP = L-threonyl-tRNA(Thr) + AMP + diphosphate + H(+). Its function is as follows. Catalyzes the attachment of threonine to tRNA(Thr) in a two-step reaction: L-threonine is first activated by ATP to form Thr-AMP and then transferred to the acceptor end of tRNA(Thr). Also edits incorrectly charged L-seryl-tRNA(Thr). This Bartonella tribocorum (strain CIP 105476 / IBS 506) protein is Threonine--tRNA ligase.